Reading from the N-terminus, the 101-residue chain is Small ribosomal subunit protein uS14 (101 aa).

The disordered stretch occupies residues 50 to 70 (SLPRDSSPSRQRKRCRQTGRP). The segment covering 59–68 (RQRKRCRQTG) has biased composition (basic residues).

The protein belongs to the universal ribosomal protein uS14 family. As to quaternary structure, part of the 30S ribosomal subunit. Contacts proteins S3 and S10.

In terms of biological role, binds 16S rRNA, required for the assembly of 30S particles and may also be responsible for determining the conformation of the 16S rRNA at the A site. The protein is Small ribosomal subunit protein uS14 of Erwinia tasmaniensis (strain DSM 17950 / CFBP 7177 / CIP 109463 / NCPPB 4357 / Et1/99).